Reading from the N-terminus, the 477-residue chain is Proton-coupled amino acid transporter 3 (477 aa).

The span at methionine 1–cysteine 13 shows a compositional bias: basic and acidic residues. The segment at methionine 1–lysine 42 is disordered. Topologically, residues methionine 1–glutamine 54 are cytoplasmic. Low complexity predominate over residues glycine 19–serine 38. The chain crosses the membrane as a helical span at residues isoleucine 55–valine 75. Residues lysine 76–asparagine 77 lie on the Extracellular side of the membrane. The chain crosses the membrane as a helical span at residues alanine 78 to methionine 98. Residues aspartate 99 to tyrosine 144 lie on the Cytoplasmic side of the membrane. A helical transmembrane segment spans residues valine 145–methionine 165. The Extracellular portion of the chain corresponds to alanine 166–leucine 202. A helical transmembrane segment spans residues threonine 203 to phenylalanine 223. The Cytoplasmic segment spans residues serine 224–threonine 225. Residues leucine 226–proline 246 form a helical membrane-spanning segment. The Extracellular segment spans residues histidine 247–threonine 259. The chain crosses the membrane as a helical span at residues phenylalanine 260–leucine 280. Residues lysine 281–proline 291 are Cytoplasmic-facing. The helical transmembrane segment at alanine 292–glycine 312 threads the bilayer. Over tyrosine 313–glycine 344 the chain is Extracellular. Residues isoleucine 345 to valine 365 traverse the membrane as a helical segment. Residues serine 366–leucine 374 are Cytoplasmic-facing. A helical membrane pass occupies residues phenylalanine 375–isoleucine 395. Over proline 396–aspartate 399 the chain is Extracellular. Residues leucine 400–leucine 420 form a helical membrane-spanning segment. At leucine 421–aspartate 439 the chain is on the cytoplasmic side. The chain crosses the membrane as a helical span at residues isoleucine 440–glutamate 460. Residues methionine 461–threonine 477 are Extracellular-facing.

This sequence belongs to the amino acid/polyamine transporter 2 family.

The protein resides in the membrane. In Rattus norvegicus (Rat), this protein is Proton-coupled amino acid transporter 3 (Slc36a3).